The following is a 959-amino-acid chain: Isoleucine--tRNA ligase (959 aa).

The short motif at proline 60 to histidine 70 is the 'HIGH' region element. Position 569 (glutamate 569) interacts with L-isoleucyl-5'-AMP. The 'KMSKS' region signature appears at lysine 610 to serine 614. Lysine 613 is a binding site for ATP. Residues cysteine 928, cysteine 931, cysteine 948, and cysteine 951 each contribute to the Zn(2+) site.

Belongs to the class-I aminoacyl-tRNA synthetase family. IleS type 1 subfamily. Monomer. Zn(2+) serves as cofactor.

It is found in the cytoplasm. It catalyses the reaction tRNA(Ile) + L-isoleucine + ATP = L-isoleucyl-tRNA(Ile) + AMP + diphosphate. Functionally, catalyzes the attachment of isoleucine to tRNA(Ile). As IleRS can inadvertently accommodate and process structurally similar amino acids such as valine, to avoid such errors it has two additional distinct tRNA(Ile)-dependent editing activities. One activity is designated as 'pretransfer' editing and involves the hydrolysis of activated Val-AMP. The other activity is designated 'posttransfer' editing and involves deacylation of mischarged Val-tRNA(Ile). The sequence is that of Isoleucine--tRNA ligase from Crocosphaera subtropica (strain ATCC 51142 / BH68) (Cyanothece sp. (strain ATCC 51142)).